The sequence spans 220 residues: MTSGEVKTSLKNAYSSAKRLSLKMEEEGEEEDYCTPGAFELERLFWKGSPQYTHVNEVWPKLYIGDEATALDRYRLQKAGFTHVLNAAHGRWNVDTGPDYYRDMDIQYHGVEADDLPTFDLSVFFYPAAAFIDRALRDDHSKILVHCVMGRSRSATLVLAYLMIHKDMTLVDAIQQVAKNRCVLPNRGFLKQLRELDKQLVQQRRQAQRQDGEEEDGREL.

A Tyrosine-protein phosphatase domain is found at 54 to 202; it reads HVNEVWPKLY…LRELDKQLVQ (149 aa). Residue 146-153 participates in substrate binding; it reads HCVMGRSR. Catalysis depends on Cys147, which acts as the Phosphocysteine intermediate.

Belongs to the protein-tyrosine phosphatase family. Non-receptor class dual specificity subfamily. In terms of assembly, homodimer. Interacts with PRKAA2.

Its subcellular location is the cytoplasm. It is found in the nucleus. It catalyses the reaction O-phospho-L-tyrosyl-[protein] + H2O = L-tyrosyl-[protein] + phosphate. It carries out the reaction O-phospho-L-seryl-[protein] + H2O = L-seryl-[protein] + phosphate. The enzyme catalyses O-phospho-L-threonyl-[protein] + H2O = L-threonyl-[protein] + phosphate. Its function is as follows. Dual specificity phosphatase able to dephosphorylate phosphotyrosine, phosphoserine and phosphothreonine residues within the same substrate, with a preference for phosphotyrosine as a substrate. Involved in the modulation of intracellular signaling cascades. In skeletal muscle regulates systemic glucose homeostasis by activating, AMPK, an energy sensor protein kinase. Affects MAP kinase signaling though modulation of the ERK1/2 cascade in skeletal muscle promoting muscle cell differentiation, development and atrophy. This Pan troglodytes (Chimpanzee) protein is Dual specificity phosphatase 29 (DUSP29).